The sequence spans 208 residues: ER membrane protein complex subunit 8/9 homolog (208 aa).

The MPN domain occupies 11 to 146; it reads YEISQNAYIK…ERSPVMQLCV (136 aa).

The protein belongs to the EMC8/EMC9 family.

The chain is ER membrane protein complex subunit 8/9 homolog (EMB2731) from Arabidopsis thaliana (Mouse-ear cress).